The following is a 166-amino-acid chain: Endoribonuclease YbeY (166 aa).

Zn(2+) is bound by residues His-132, His-136, and His-142.

This sequence belongs to the endoribonuclease YbeY family. Zn(2+) serves as cofactor.

It is found in the cytoplasm. Functionally, single strand-specific metallo-endoribonuclease involved in late-stage 70S ribosome quality control and in maturation of the 3' terminus of the 16S rRNA. The protein is Endoribonuclease YbeY of Clostridium botulinum (strain Eklund 17B / Type B).